A 1622-amino-acid chain; its full sequence is DNA (cytosine-5)-methyltransferase 1 (1622 aa).

Residues 1–145 (MPARTAPARV…RRSKSDSETM (145 aa)) form an interaction with DNMT3A region. Interaction with the PRC2/EED-EZH2 complex stretches follow at residues 1 to 342 (MPAR…VERK) and 304 to 610 (TPEP…TVIN). At Ser-15 the chain carries Phosphoserine. One can recognise a DMAP1-binding domain in the interval 16–109 (PAGSLPDHVR…TQKANGCPAN (94 aa)). Lys-70 carries the post-translational modification N6,N6-dimethyllysine; by EHMT2. A disordered region spans residues 100 to 360 (TQKANGCPAN…IPKLNPPQCP (261 aa)). Residues 126–137 (PRSRPKPRGPRR) show a composition bias toward basic residues. Ser-138 carries the phosphoserine modification. The residue at position 139 (Lys-139) is an N6-methyllysine; by SETD7. Ser-140 carries the phosphoserine; by PKB/AKT1 modification. Residues 146-213 (IEASSSSVAT…TESRASRAGE (68 aa)) are interaction with DNMT3B. A phosphoserine mark is found at Ser-149 and Ser-151. Low complexity predominate over residues 149 to 166 (SSSSVATRRTTRQTTITS). Thr-163 carries the post-translational modification Phosphothreonine. Position 169 is an N6-acetyllysine (Lys-169). Residues 173-200 (KRKPKEDSEKGNANESAAEERDQDKKRR) carry the Nuclear localization signal motif. 4 stretches are compositionally biased toward basic and acidic residues: residues 176–197 (PKED…DQDK), 207–222 (RASR…ERVR), 237–269 (DDRR…THLD), and 276–300 (KDKR…KEEV). Thr-304 carries the post-translational modification Phosphothreonine. A DNA replication foci-targeting sequence region spans residues 327 to 556 (KPEPLSIPVQ…NVNRFTEDSL (230 aa)). Zn(2+) contacts are provided by Cys-359 and Cys-362. Lys-372 carries the N6-acetyllysine modification. Ser-400 is modified (phosphoserine). Residues Cys-420 and His-424 each coordinate Zn(2+). Residues Ser-515 and Ser-555 each carry the phosphoserine modification. A CXXC-type zinc finger spans residues 650 to 696 (NTMKRRRCGVCEVCQQPECGKCKACKDMVKFGGTGRSKQACLKRRCP). Zn(2+) is bound by residues Cys-657, Cys-660, Cys-663, Cys-668, Cys-671, Cys-674, Cys-690, and Cys-695. The segment at 697–758 (NLAVKEADED…TYYWKVSIDE (62 aa)) is autoinhibitory linker. The interval 702 to 733 (EADEDEEADDDIPELPSPKKLHQGKKKKQNKD) is disordered. A compositionally biased stretch (acidic residues) spans 703-714 (ADEDEEADDDIP). Phosphoserine is present on Ser-718. Basic residues predominate over residues 720 to 731 (KKLHQGKKKKQN). Ser-736 bears the Phosphoserine mark. The residue at position 753 (Lys-753) is an N6-acetyllysine. A BAH 1 domain is found at 759–884 (ETLEVGDCVS…QDYARFESPP (126 aa)). Ser-882 bears the Phosphoserine mark. 3 positions are modified to N6-acetyllysine: Lys-895, Lys-961, and Lys-980. The 129-residue stretch at 977 to 1105 (TYRKYSDYIK…SKTKSFEDPP (129 aa)) folds into the BAH 2 domain. A disordered region spans residues 1099-1138 (KSFEDPPNHARSPGNKGKGKGKGKGKGKPQVSEPKEPEAA). Tandem repeats lie at residues 1114 to 1115 (KG), 1116 to 1117 (KG), 1118 to 1119 (KG), 1120 to 1121 (KG), 1122 to 1123 (KG), and 1124 to 1125 (KG). The segment at 1114–1127 (KGKGKGKGKGKGKP) is 7 X 2 AA tandem repeats of K-G. Basic residues predominate over residues 1115–1125 (GKGKGKGKGKG). N6-acetyllysine occurs at positions 1116, 1118, 1120, 1122, 1124, and 1126. One copy of the 7; approximate repeat lies at 1126–1127 (KP). Residues 1126–1622 (KPQVSEPKEP…KGKEETTTED (497 aa)) are interaction with the PRC2/EED-EZH2 complex. In terms of domain architecture, SAM-dependent MTase C5-type spans 1144–1603 (LRTLDVFSGC…LEIKLCLLAS (460 aa)). The catalytic stretch occupies residues 1144–1622 (LRTLDVFSGC…KGKEETTTED (479 aa)). S-adenosyl-L-methionine-binding positions include Ser-1151, 1155–1156 (GL), 1173–1174 (EM), 1195–1196 (DC), and Cys-1196. Residue Cys-1231 is part of the active site. Lys-1354 is subject to N6-acetyllysine. Residue Ser-1436 is modified to Phosphoserine. Positions 1582 and 1584 each coordinate S-adenosyl-L-methionine. Lys-1613 is covalently cross-linked (Glycyl lysine isopeptide (Lys-Gly) (interchain with G-Cter in SUMO2)).

The protein belongs to the class I-like SAM-binding methyltransferase superfamily. C5-methyltransferase family. In terms of assembly, homodimer. Forms a stable complex with E2F1, BB1 and HDAC1. Forms a complex with DMAP1 and HDAC2, with direct interaction. Interacts with the PRC2/EED-EZH2 complex. Probably part of a corepressor complex containing ZNF304, TRIM28, SETDB1 and DNMT1. Interacts with UHRF1; promoting its recruitment to hemimethylated DNA. Interacts with USP7, promoting its deubiquitination. Interacts with PCNA. Interacts with MBD2 and MBD3. Interacts with DNMT3A and DNMT3B. Interacts with UBC9. Interacts with CSNK1D. Interacts with HDAC1. Interacts with BAZ2A/TIP5. Interacts with SIRT7. Interacts with ZNF263; recruited to the SIX3 promoter along with other proteins involved in chromatin modification and transcriptional corepression where it contributes to transcriptional repression. Interacts with L3MBTL3 and DCAF5; the interaction requires DNMT1 methylation at Lys-139 and is necessary to target DNMT1 for ubiquitination by the CRL4-DCAF5 E3 ubiquitin ligase complex and proteasomal degradation. Interacts with PHF20L1; the interaction requires DNMT1 methylation at Lys-139 and protects DNMT1 from ubiquitination and proteasomal degradation. In terms of processing, sumoylated; sumoylation increases activity. Acetylation on multiple lysines, mainly by KAT2B/PCAF, regulates cell cycle G(2)/M transition. Deacetylation of Lys-1116 and Lys-1354 by SIRT1 increases methyltransferase activity. Post-translationally, phosphorylation of Ser-151 by CDKs is important for enzymatic activity and protein stability. Phosphorylation of Ser-140 by AKT1 prevents methylation by SETD7 thereby increasing DNMT1 stability. In terms of processing, methylation at Lys-139 by SETD7 is necessary for the regulation of DNMT1 proteasomal degradation. Ubiquitinated by UHRF1; interaction with USP7 counteracts ubiquitination by UHRF1 by promoting deubiquitination and preventing degradation by the proteasome. In terms of tissue distribution, isoforms 0 and 8 are highly expressed in placenta, brain, lung, spleen, kidney, heart, and at much lower levels in liver. Isoform 1 is expressed in cerebellum, isoform 2 in muscle and testis, isoform 3 in lung, isoform 4 in spleen and brain, and isoform 5 in brain.

It localises to the nucleus. It catalyses the reaction a 2'-deoxycytidine in DNA + S-adenosyl-L-methionine = a 5-methyl-2'-deoxycytidine in DNA + S-adenosyl-L-homocysteine + H(+). Functionally, methylates CpG residues. Preferentially methylates hemimethylated DNA. Associates with DNA replication sites in S phase maintaining the methylation pattern in the newly synthesized strand, that is essential for epigenetic inheritance. Associates with chromatin during G2 and M phases to maintain DNA methylation independently of replication. It is responsible for maintaining methylation patterns established in development. DNA methylation is coordinated with methylation of histones. Mediates transcriptional repression by direct binding to HDAC2. In association with DNMT3B and via the recruitment of CTCFL/BORIS, involved in activation of BAG1 gene expression by modulating dimethylation of promoter histone H3 at H3K4 and H3K9. Probably forms a corepressor complex required for activated KRAS-mediated promoter hypermethylation and transcriptional silencing of tumor suppressor genes (TSGs) or other tumor-related genes in colorectal cancer (CRC) cells. Also required to maintain a transcriptionally repressive state of genes in undifferentiated embryonic stem cells (ESCs). Associates at promoter regions of tumor suppressor genes (TSGs) leading to their gene silencing. Promotes tumor growth. In Rattus norvegicus (Rat), this protein is DNA (cytosine-5)-methyltransferase 1 (Dnmt1).